The following is a 645-amino-acid chain: Glucans biosynthesis glucosyltransferase H (645 aa).

Residues 1-28 (MDGTVTLSPAPTDLPPVSSLDAGQPTLP) form a disordered region. Helical transmembrane passes span 64–84 (LIGG…SVLW), 98–118 (LFVL…AGFI), 423–443 (APMW…GAGI), 465–485 (AIWI…LGYI), 504–524 (ALSI…VMYL), 558–578 (SYGG…LVSP), and 580–600 (LAAW…VVAV).

The protein belongs to the glycosyltransferase 2 family. OpgH subfamily.

It is found in the cell inner membrane. The protein operates within glycan metabolism; osmoregulated periplasmic glucan (OPG) biosynthesis. Involved in the biosynthesis of osmoregulated periplasmic glucans (OPGs). The chain is Glucans biosynthesis glucosyltransferase H from Xanthomonas campestris pv. campestris (strain 8004).